The chain runs to 102 residues: Large ribosomal subunit protein bL21 (102 aa).

This sequence belongs to the bacterial ribosomal protein bL21 family. Part of the 50S ribosomal subunit. Contacts protein L20.

This protein binds to 23S rRNA in the presence of protein L20. The chain is Large ribosomal subunit protein bL21 from Listeria monocytogenes serotype 4b (strain F2365).